Consider the following 390-residue polypeptide: Protein-glutamate methylesterase/protein-glutamine glutaminase 1 (390 aa).

The Response regulatory domain maps to 4 to 121 (KVLVVDDSGF…SRNPQKVKQL (118 aa)). Aspartate 55 is modified (4-aspartylphosphate). The segment covering 132-186 (SNRRSSGIGSASAASPAPAAPAPSTLSSRAPAPSAAAPARAVPSRTVAPAAAPAA) has biased composition (low complexity). Residues 132–201 (SNRRSSGIGS…PAHPTTTGTA (70 aa)) are disordered. A CheB-type methylesterase domain is found at 195-387 (PTTTGTAKRK…LDDIGRHLVE (193 aa)). Residues serine 214, histidine 241, and aspartate 334 contribute to the active site.

This sequence belongs to the CheB family. In terms of processing, phosphorylated by CheA. Phosphorylation of the N-terminal regulatory domain activates the methylesterase activity.

Its subcellular location is the cytoplasm. The catalysed reaction is [protein]-L-glutamate 5-O-methyl ester + H2O = L-glutamyl-[protein] + methanol + H(+). It carries out the reaction L-glutaminyl-[protein] + H2O = L-glutamyl-[protein] + NH4(+). Functionally, involved in chemotaxis. Part of a chemotaxis signal transduction system that modulates chemotaxis in response to various stimuli. Catalyzes the demethylation of specific methylglutamate residues introduced into the chemoreceptors (methyl-accepting chemotaxis proteins or MCP) by CheR. Also mediates the irreversible deamidation of specific glutamine residues to glutamic acid. This chain is Protein-glutamate methylesterase/protein-glutamine glutaminase 1, found in Pseudomonas syringae pv. tomato (strain ATCC BAA-871 / DC3000).